Reading from the N-terminus, the 173-residue chain is Ribosomal RNA large subunit methyltransferase H (173 aa).

Residues Leu-89 and Gly-121 each coordinate S-adenosyl-L-methionine.

This sequence belongs to the RNA methyltransferase RlmH family. Homodimer.

Its subcellular location is the cytoplasm. The enzyme catalyses pseudouridine(1915) in 23S rRNA + S-adenosyl-L-methionine = N(3)-methylpseudouridine(1915) in 23S rRNA + S-adenosyl-L-homocysteine + H(+). Functionally, specifically methylates the pseudouridine at position 1915 (m3Psi1915) in 23S rRNA. This is Ribosomal RNA large subunit methyltransferase H from Chelativorans sp. (strain BNC1).